The following is a 376-amino-acid chain: Carbamoyl phosphate synthase small chain (376 aa).

The segment at 1–187 (MKALLALEDG…KEDGSFLWKQ (187 aa)) is CPSase. Residues S45, G239, and G241 each contribute to the L-glutamine site. Residues 189-376 (KIPLIVYDYG…KEVVLLKLGC (188 aa)) form the Glutamine amidotransferase type-1 domain. Residue C266 is the Nucleophile of the active site. L-glutamine-binding residues include L267, Q270, N308, G310, and F311. Active-site residues include H349 and E351.

The protein belongs to the CarA family. In terms of assembly, composed of two chains; the small (or glutamine) chain promotes the hydrolysis of glutamine to ammonia, which is used by the large (or ammonia) chain to synthesize carbamoyl phosphate. Tetramer of heterodimers (alpha,beta)4.

The catalysed reaction is hydrogencarbonate + L-glutamine + 2 ATP + H2O = carbamoyl phosphate + L-glutamate + 2 ADP + phosphate + 2 H(+). It carries out the reaction L-glutamine + H2O = L-glutamate + NH4(+). The protein operates within amino-acid biosynthesis; L-arginine biosynthesis; carbamoyl phosphate from bicarbonate: step 1/1. It participates in pyrimidine metabolism; UMP biosynthesis via de novo pathway; (S)-dihydroorotate from bicarbonate: step 1/3. Small subunit of the glutamine-dependent carbamoyl phosphate synthetase (CPSase). CPSase catalyzes the formation of carbamoyl phosphate from the ammonia moiety of glutamine, carbonate, and phosphate donated by ATP, constituting the first step of 2 biosynthetic pathways, one leading to arginine and/or urea and the other to pyrimidine nucleotides. The small subunit (glutamine amidotransferase) binds and cleaves glutamine to supply the large subunit with the substrate ammonia. This is Carbamoyl phosphate synthase small chain from Lawsonia intracellularis (strain PHE/MN1-00).